The primary structure comprises 493 residues: MTTDALTALLPFIVLSAAAVAVMLAIAIRRSFRLVFWLTVGGLLAGLSTLPHASSVAPLQVTDLLRVDAYGLFFHALFLLAALVVALLCLAYFRRRENENEEIFVLLLTSTLGALLLVSSAHLAMFFLGLEVLTISLFPMIAYSVRASRPLEAGIKYLMLSGLASSFLMFGMAMVYGDLGVLSFEQIGAHGAELEQKPLALAGLFLILAAIGFKLSLVPFHLWTPDVYQGAPTPVTAFLATVSKASVFALLLRFFTAAHAERSETFLCVLGLLAVVSILAGNLLALLQVSLKRLLAYSSIAHMGYLLTGFVAAGLLRRDLQTETIAFYLAAYTVTSLTAFGAISALSDDDRESDRLSDYAGLFWRSPWLAAVLTLSLLSLAGIPLTVGFVGKFYVFAVGVQAETWPLVATVVIGSGIGIYYYLRVVLTMIQPAGVGQRVTLHPAAGTALAAAALVILAAGLFPQPLIDAAANVPQPPPTADSPQRLTATGGLP.

14 helical membrane-spanning segments follow: residues 8–28 (ALLP…AIAI), 34–54 (LVFW…PHAS), 71–91 (GLFF…LCLA), 102–122 (EIFV…SSAH), 123–143 (LAMF…MIAY), 157–177 (YLML…MVYG), 200–220 (ALAG…LVPF), 232–252 (PTPV…ALLL), 266–286 (FLCV…LLAL), 294–314 (LLAY…VAAG), 325–345 (IAFY…AISA), 370–390 (AAVL…VGFV), 405–427 (WPLV…RVVL), and 443–463 (PAAG…GLFP). The disordered stretch occupies residues 473–493 (VPQPPPTADSPQRLTATGGLP).

This sequence belongs to the complex I subunit 2 family. In terms of assembly, NDH-1 is composed of 14 different subunits. Subunits NuoA, H, J, K, L, M, N constitute the membrane sector of the complex.

Its subcellular location is the cell inner membrane. The catalysed reaction is a quinone + NADH + 5 H(+)(in) = a quinol + NAD(+) + 4 H(+)(out). Its function is as follows. NDH-1 shuttles electrons from NADH, via FMN and iron-sulfur (Fe-S) centers, to quinones in the respiratory chain. The immediate electron acceptor for the enzyme in this species is believed to be ubiquinone. Couples the redox reaction to proton translocation (for every two electrons transferred, four hydrogen ions are translocated across the cytoplasmic membrane), and thus conserves the redox energy in a proton gradient. The protein is NADH-quinone oxidoreductase subunit N of Methylococcus capsulatus (strain ATCC 33009 / NCIMB 11132 / Bath).